Reading from the N-terminus, the 311-residue chain is tRNA-cytidine(32) 2-sulfurtransferase (311 aa).

Positions 47–52 (SGGKDS) match the PP-loop motif motif. Residues cysteine 122, cysteine 125, and cysteine 213 each coordinate [4Fe-4S] cluster.

It belongs to the TtcA family. Homodimer. The cofactor is Mg(2+). [4Fe-4S] cluster serves as cofactor.

The protein resides in the cytoplasm. It carries out the reaction cytidine(32) in tRNA + S-sulfanyl-L-cysteinyl-[cysteine desulfurase] + AH2 + ATP = 2-thiocytidine(32) in tRNA + L-cysteinyl-[cysteine desulfurase] + A + AMP + diphosphate + H(+). It participates in tRNA modification. Functionally, catalyzes the ATP-dependent 2-thiolation of cytidine in position 32 of tRNA, to form 2-thiocytidine (s(2)C32). The sulfur atoms are provided by the cysteine/cysteine desulfurase (IscS) system. This Enterobacter sp. (strain 638) protein is tRNA-cytidine(32) 2-sulfurtransferase.